A 110-amino-acid polypeptide reads, in one-letter code: U1-lycotoxin-Ls1hh (110 aa).

Residues 1–20 (MKFVLLFGVLLVTLFSYSSA) form the signal peptide. Positions 21–44 (EMLDDFDQADEDELLSLIEKEEAR) are excised as a propeptide. 4 disulfide bridges follow: cysteine 47-cysteine 62, cysteine 54-cysteine 71, cysteine 61-cysteine 89, and cysteine 73-cysteine 87.

It belongs to the neurotoxin 19 (CSTX) family. 03 subfamily. In terms of tissue distribution, expressed by the venom gland.

The protein resides in the secreted. The chain is U1-lycotoxin-Ls1hh from Lycosa singoriensis (Wolf spider).